The following is a 64-amino-acid chain: MSTFIVVFLLLTAILCHAEHAIDETARGCNRLNKKCNSDADCCRYGERCISTGVNYYCRPDFGP.

Positions 1–18 (MSTFIVVFLLLTAILCHA) are cleaved as a signal peptide. A propeptide spanning residues 19 to 27 (EHAIDETAR) is cleaved from the precursor. Cystine bridges form between Cys29/Cys43, Cys36/Cys49, and Cys42/Cys58.

Belongs to the scorpion calcin-like family. Expressed by the venom gland.

It localises to the secreted. Voltage-gated potassium channel (Kv) inhibitor. In addition it may increase intracellular calcium release through the activation of nuclear inositol 1,4,5-trisphosphate receptors (ITPR) of cardiomyocytes, thereby causing an increase in the contraction frequency of these cells. The sequence is that of Neurotoxin lambda-MeuTx from Mesobuthus eupeus (Lesser Asian scorpion).